The sequence spans 207 residues: ATP-dependent Clp protease proteolytic subunit (207 aa).

Catalysis depends on Ser111, which acts as the Nucleophile. His136 is a catalytic residue.

Belongs to the peptidase S14 family. As to quaternary structure, fourteen ClpP subunits assemble into 2 heptameric rings which stack back to back to give a disk-like structure with a central cavity, resembling the structure of eukaryotic proteasomes.

It is found in the cytoplasm. The catalysed reaction is Hydrolysis of proteins to small peptides in the presence of ATP and magnesium. alpha-casein is the usual test substrate. In the absence of ATP, only oligopeptides shorter than five residues are hydrolyzed (such as succinyl-Leu-Tyr-|-NHMec, and Leu-Tyr-Leu-|-Tyr-Trp, in which cleavage of the -Tyr-|-Leu- and -Tyr-|-Trp bonds also occurs).. Its function is as follows. Cleaves peptides in various proteins in a process that requires ATP hydrolysis. Has a chymotrypsin-like activity. Plays a major role in the degradation of misfolded proteins. This Aeromonas salmonicida (strain A449) protein is ATP-dependent Clp protease proteolytic subunit.